The following is a 198-amino-acid chain: dTTP/UTP pyrophosphatase (198 aa).

The Proton acceptor role is filled by D76.

The protein belongs to the Maf family. YhdE subfamily. A divalent metal cation is required as a cofactor.

The protein resides in the cytoplasm. It catalyses the reaction dTTP + H2O = dTMP + diphosphate + H(+). The catalysed reaction is UTP + H2O = UMP + diphosphate + H(+). Its function is as follows. Nucleoside triphosphate pyrophosphatase that hydrolyzes dTTP and UTP. May have a dual role in cell division arrest and in preventing the incorporation of modified nucleotides into cellular nucleic acids. The polypeptide is dTTP/UTP pyrophosphatase (Shewanella denitrificans (strain OS217 / ATCC BAA-1090 / DSM 15013)).